Here is a 218-residue protein sequence, read N- to C-terminus: Cytidylate kinase (218 aa).

11–19 contacts ATP; that stretch reads GPGASGKGT.

It belongs to the cytidylate kinase family. Type 1 subfamily.

Its subcellular location is the cytoplasm. The enzyme catalyses CMP + ATP = CDP + ADP. It catalyses the reaction dCMP + ATP = dCDP + ADP. In Neisseria meningitidis serogroup A / serotype 4A (strain DSM 15465 / Z2491), this protein is Cytidylate kinase.